The primary structure comprises 129 residues: Phosphoribosyl-AMP cyclohydrolase (129 aa).

Position 77 (D77) interacts with Mg(2+). A Zn(2+)-binding site is contributed by C78. Mg(2+)-binding residues include D79 and D81. Positions 94 and 101 each coordinate Zn(2+).

This sequence belongs to the PRA-CH family. In terms of assembly, homodimer. Mg(2+) serves as cofactor. Zn(2+) is required as a cofactor.

It is found in the cytoplasm. It catalyses the reaction 1-(5-phospho-beta-D-ribosyl)-5'-AMP + H2O = 1-(5-phospho-beta-D-ribosyl)-5-[(5-phospho-beta-D-ribosylamino)methylideneamino]imidazole-4-carboxamide. It participates in amino-acid biosynthesis; L-histidine biosynthesis; L-histidine from 5-phospho-alpha-D-ribose 1-diphosphate: step 3/9. Its function is as follows. Catalyzes the hydrolysis of the adenine ring of phosphoribosyl-AMP. This chain is Phosphoribosyl-AMP cyclohydrolase, found in Methanosphaera stadtmanae (strain ATCC 43021 / DSM 3091 / JCM 11832 / MCB-3).